We begin with the raw amino-acid sequence, 387 residues long: Protein SGT1 homolog (387 aa).

TPR repeat units lie at residues 1–34 (MEQL…SNNA), 36–67 (AFFK…DSNN), and 68–101 (SKYY…DSEN). Disordered stretches follow at residues 110-193 (KSKA…PSSG) and 299-323 (SPAV…EEKL). A compositionally biased stretch (low complexity) spans 118-127 (NPTTTTTTTP). Residues 128 to 138 (TPTPTPTPAPQ) are compositionally biased toward pro residues. A compositionally biased stretch (low complexity) spans 139–185 (PVTTTTNPTPIPTTSNTTTTTNNNNNNNNNNNNNNNNNNTTTDSTTT). Positions 193–282 (GNKVRHEWYQ…SRAIKWDTLE (90 aa)) constitute a CS domain. In terms of domain architecture, SGS spans 301–387 (AVPSPYASKK…KGLEFKQYEK (87 aa)). The segment covering 308–323 (SKKDWDKLPNEPEEKL) has biased composition (basic and acidic residues).

This sequence belongs to the SGT1 family.

Its function is as follows. May play a role in ubiquitination and subsequent proteasomal degradation of target proteins. The protein is Protein SGT1 homolog (sugt1) of Dictyostelium discoideum (Social amoeba).